A 127-amino-acid chain; its full sequence is Ribosome-binding factor A (127 aa).

This sequence belongs to the RbfA family. Monomer. Binds 30S ribosomal subunits, but not 50S ribosomal subunits or 70S ribosomes.

The protein resides in the cytoplasm. Its function is as follows. One of several proteins that assist in the late maturation steps of the functional core of the 30S ribosomal subunit. Associates with free 30S ribosomal subunits (but not with 30S subunits that are part of 70S ribosomes or polysomes). Required for efficient processing of 16S rRNA. May interact with the 5'-terminal helix region of 16S rRNA. The polypeptide is Ribosome-binding factor A (Rickettsia typhi (strain ATCC VR-144 / Wilmington)).